The primary structure comprises 181 residues: UPF0397 protein STER_0346 (181 aa).

5 helical membrane passes run 11-31, 45-65, 72-92, 109-129, and 147-167; these read ATGI…IPIF, LFSV…GHAL, GNIS…IGLF, IWFN…VTPI, and FVAG…LLAI.

The protein belongs to the UPF0397 family.

It is found in the cell membrane. The protein is UPF0397 protein STER_0346 of Streptococcus thermophilus (strain ATCC BAA-491 / LMD-9).